A 335-amino-acid polypeptide reads, in one-letter code: Acetyl-coenzyme A carboxylase carboxyl transferase subunit alpha (335 aa).

Residues 48–308 (TLELKVDALR…KEILIEELKA (261 aa)) enclose the CoA carboxyltransferase C-terminal domain.

Belongs to the AccA family. Acetyl-CoA carboxylase is a heterohexamer composed of biotin carboxyl carrier protein (AccB), biotin carboxylase (AccC) and two subunits each of ACCase subunit alpha (AccA) and ACCase subunit beta (AccD).

It is found in the cytoplasm. The enzyme catalyses N(6)-carboxybiotinyl-L-lysyl-[protein] + acetyl-CoA = N(6)-biotinyl-L-lysyl-[protein] + malonyl-CoA. The protein operates within lipid metabolism; malonyl-CoA biosynthesis; malonyl-CoA from acetyl-CoA: step 1/1. In terms of biological role, component of the acetyl coenzyme A carboxylase (ACC) complex. First, biotin carboxylase catalyzes the carboxylation of biotin on its carrier protein (BCCP) and then the CO(2) group is transferred by the carboxyltransferase to acetyl-CoA to form malonyl-CoA. This chain is Acetyl-coenzyme A carboxylase carboxyl transferase subunit alpha, found in Pelodictyon phaeoclathratiforme (strain DSM 5477 / BU-1).